Here is a 1834-residue protein sequence, read N- to C-terminus: Sodium channel protein type 4 subunit alpha (1834 aa).

Residues 1–131 lie on the Cytoplasmic side of the membrane; the sequence is MASSSLPNLV…RSAIKVLIHS (131 aa). Residues 113–448 form an I repeat; that stretch reads MLSPFSIIRR…VVTMAYAEQN (336 aa). Residues 132-150 form a helical membrane-spanning segment; it reads LFSMFIMITILPNCVVMTM. The Extracellular portion of the chain corresponds to 151–157; the sequence is SDPPPWP. The chain crosses the membrane as a helical span at residues 158–178; it reads IHVENTFTGINTFESLIKMLA. At 179 to 192 the chain is on the cytoplasmic side; the sequence is RGFCIDDFTFLRDP. The chain crosses the membrane as a helical span at residues 193–210; it reads WNWLDFSVIMMAYLTEFV. Over 211 to 216 the chain is Extracellular; the sequence is DLGNIS. Asn214 is a glycosylation site (N-linked (GlcNAc...) asparagine). Residues 217-233 form a helical membrane-spanning segment; the sequence is ALRTFRVLRALKTITVI. Over 234–252 the chain is Cytoplasmic; that stretch reads PGLKTIVGALIQSVKKLSD. A helical transmembrane segment spans residues 253 to 272; the sequence is VMILTVFCLSVFALVGLQLF. The Extracellular portion of the chain corresponds to 273-385; it reads MGNLRQKCVR…PNYGYTSHDT (113 aa). A disulfide bridge connects residues Cys280 and Cys354. 7 N-linked (GlcNAc...) asparagine glycosylation sites follow: Asn288, Asn291, Asn297, Asn303, Asn309, Asn327, and Asn356. Cys363 and Cys369 are oxidised to a cystine. The pore-forming intramembrane region spans 386–410; sequence FSWAFLALFRLMIQDYWENLFQLTL. At 411 to 417 the chain is on the extracellular side; sequence RAAGKTY. Residues 418-438 form a helical membrane-spanning segment; the sequence is MIFFVVIIFLGSFYLINLILA. Topologically, residues 439-572 are cytoplasmic; sequence VVTMAYAEQN…NIIHLIVMDP (134 aa). Residues 486 to 525 form a disordered region; that stretch reads EGGEAGGDPAHSKDCNGSLDTSPGEKGPPRQSCSADSGVS. Residues 554-826 form an II repeat; that stretch reads CCTPWVKFKN…QISSWPIKLG (273 aa). The chain crosses the membrane as a helical span at residues 573-591; the sequence is FVDLGITICIVLNTLFMAM. Residues 592–602 lie on the Extracellular side of the membrane; that stretch reads EHYPMTEHFDK. Residues 603–622 traverse the membrane as a helical segment; the sequence is VLTVGNLVFTGIFTAEMVLK. Residues 623-636 are Cytoplasmic-facing; the sequence is LIALDPYEYFQQGW. A helical membrane pass occupies residues 637 to 656; the sequence is NVFDSIIVTLSWVELGLVNV. Residues 657–658 lie on the Extracellular side of the membrane; it reads KG. The helical transmembrane segment at 659 to 676 threads the bilayer; it reads LSVLRSFRLVRSLKLAKS. The Cytoplasmic segment spans residues 677 to 692; it reads WPTLNMFIRIIGNSGG. The helical transmembrane segment at 693–711 threads the bilayer; it reads GLGNLTLVLAIIVVNFSVV. The Extracellular segment spans residues 712–740; the sequence is GMQLFGKNYKECVCKNASDCALPRWKMCD. The cysteines at positions 725 and 731 are disulfide-linked. An intramembrane region (pore-forming) is located at residues 741–761; the sequence is FFHSFLIVLRILCGEWIEPMW. Over 762 to 772 the chain is Extracellular; it reads GFMEVAGQAMF. The chain crosses the membrane as a helical span at residues 773-791; sequence LTVLLMVMVNGNLVDLDLF. At 792–1029 the chain is on the cytoplasmic side; it reads LALLLNPLNS…ACFKIVEHHW (238 aa). 2 disordered regions span residues 853-886 and 929-989; these read GDPG…KDLK and SDLE…QPEE. Positions 860-869 are enriched in acidic residues; the sequence is EAGEAEESAP. Residues 870-886 show a composition bias toward basic and acidic residues; sequence EDEKKEPPPEDDDKDLK. Composition is skewed to acidic residues over residues 929–945 and 972–989; these read SDLE…FSEP and EDPE…QPEE. One copy of the III repeat lies at 1010–1323; that stretch reads RGKMWWTLRR…KKYYNAMKKL (314 aa). A helical membrane pass occupies residues 1030-1047; the sequence is FKTFNSSLILLNSGTLAF. At 1048–1060 the chain is on the extracellular side; it reads EDIYIEQRRVIRT. The chain crosses the membrane as a helical span at residues 1061 to 1079; it reads ILEYADKVFTYIFIMEMLL. The Cytoplasmic portion of the chain corresponds to 1080–1093; that stretch reads KWVAYGFKVYFTNA. Residues 1094-1112 traverse the membrane as a helical segment; it reads WCWLDFLIVDVSIISLVAN. Residues 1113–1120 lie on the Extracellular side of the membrane; the sequence is WLGYSELG. A helical membrane pass occupies residues 1121–1139; the sequence is PIKSLRTLRALRPLRALSR. The Cytoplasmic segment spans residues 1140–1156; that stretch reads FEGMRVVVNALLGAIPS. Residues 1157 to 1176 traverse the membrane as a helical segment; it reads IMNVLLVCLIFWVIFSIMGV. At 1177-1227 the chain is on the extracellular side; that stretch reads NLFAAKIYYFINTTTSERFDISGVNNKSECESLIHTGQVRWLNVKVNYDNV. N-linked (GlcNAc...) asparagine glycosylation is found at Asn1188 and Asn1202. Residues 1228 to 1249 constitute an intramembrane region (pore-forming); the sequence is GLGYLSLLQVATFKGWMDIMYS. The Extracellular portion of the chain corresponds to 1250–1266; it reads AVDSREQEEQPQYEVNI. Residues 1267–1288 form a helical membrane-spanning segment; that stretch reads YMYLYFVIFIIFGSFFTINSLI. Residues 1289-1351 lie on the Cytoplasmic side of the membrane; sequence RLIIVNFNQQ…MVYDFVTKQV (63 aa). Positions 1307–1309 are important for rapid channel inactivation; it reads IFM. The stretch at 1332-1630 is one IV repeat; it reads IPRPQNKIQG…WEKFGPDATQ (299 aa). A helical membrane pass occupies residues 1352 to 1369; that stretch reads FDITIMILICLNMVTMMV. Topologically, residues 1370 to 1380 are extracellular; the sequence is ETDDQSQLKVD. The helical transmembrane segment at 1381 to 1399 threads the bilayer; it reads ILYNINMVFIIVFTGECVL. At 1400–1411 the chain is on the cytoplasmic side; that stretch reads KMFALRQNYFTV. The helical transmembrane segment at 1412 to 1429 threads the bilayer; sequence GWNIFDFVVVILSIVGLA. The Extracellular segment spans residues 1430–1442; that stretch reads LSDLIQKYFVSPT. A helical transmembrane segment spans residues 1443-1459; sequence LFRVIRLARIGRVLRLI. At 1460–1478 the chain is on the cytoplasmic side; the sequence is RGAKGIRTLLFALMMSLPA. A helical membrane pass occupies residues 1479 to 1496; the sequence is LFNIGLLLILVMFIYSIF. Topologically, residues 1497–1518 are extracellular; the sequence is GMSNFAYVKKESGIDDMFNFET. The pore-forming intramembrane region spans 1519-1541; that stretch reads FGNSIICLFEITTSAGWDGLLNP. Over 1542–1571 the chain is Extracellular; the sequence is ILNSGPPDCDPTLENPGTSVRGDCGNPSIG. An intrachain disulfide couples Cys1550 to Cys1565. A helical transmembrane segment spans residues 1572–1594; it reads ICFFCSYIIISFLIVVNMYIAII. At 1595-1834 the chain is on the cytoplasmic side; that stretch reads LENFNVATEE…LHPGVKESLV (240 aa). Residues 1724-1753 form the IQ domain; it reads EEVCAIKIQRAYRRHLLQRSVKQASYMYRH. The tract at residues 1776–1834 is disordered; that stretch reads MYGRENGNSGVQNKGEERGSTGDAGPTMGLTPINPSDSALPPSPPPGLPLHPGVKESLV.

This sequence belongs to the sodium channel (TC 1.A.1.10) family. Nav1.4/SCN4A subfamily. The Nav1.4 voltage-gated sodium channel consists of an ion-conducting alpha subunit SCN4A which is functional on its own and a regulatory beta subunit SCN1B. SCN1B strongly enhances the presence of SCN4A at the cell surface. SCN1B is also required for rapid channel inactivation and recovery after inactivation. It prevents the decrease of channel activity in response to repetitive, high-frequency depolarizations. Interacts with the syntrophins SNTA1, SNTB1 and SNTB2 (via PDZ domain); probably links SCN4A to the actin cytoskeleton and the extracellular matrix via the dystrophin-associated protein complex and regulates its localization in muscle cells. Interacts with TMEM233; probable regulator of the channel.

It localises to the cell membrane. The catalysed reaction is Na(+)(in) = Na(+)(out). Its function is as follows. Pore-forming subunit of Nav1.4, a voltage-gated sodium (Nav) channel that directly mediates the depolarizing phase of action potentials in excitable membranes. Navs, also called VGSCs (voltage-gated sodium channels) or VDSCs (voltage-dependent sodium channels), operate by switching between closed and open conformations depending on the voltage difference across the membrane. In the open conformation they allow Na(+) ions to selectively pass through the pore, along their electrochemical gradient. The influx of Na+ ions provokes membrane depolarization, initiating the propagation of electrical signals throughout cells and tissues. Highly expressed in skeletal muscles, Nav1.4 generates the action potential crucial for muscle contraction. The polypeptide is Sodium channel protein type 4 subunit alpha (Equus caballus (Horse)).